A 500-amino-acid chain; its full sequence is Toluene-4-monooxygenase system, hydroxylase component subunit alpha (500 aa).

Residues E104, E134, H137, E197, E231, and H234 each contribute to the Fe cation site.

The protein belongs to the TmoA/XamoA family. In terms of assembly, the alkene monooxygenase multicomponent enzyme system is composed of an electron transfer component and a monooxygenase component interacting with the effector protein TmoD. The electron transfer component is composed of a ferredoxin reductase (TmoF) and a ferredoxin (TmoC), and the monooxygenase component is formed by a heterohexamer (dimer of heterotrimers) of two alpha subunits (TmoA), two beta subunits (TmoE) and two gamma subunits (TmoB). It depends on Fe(2+) as a cofactor.

It carries out the reaction toluene + NADH + O2 + H(+) = 4-methylphenol + NAD(+) + H2O. The protein operates within xenobiotic degradation; toluene degradation. With respect to regulation, inhibited by Zn(2+) and Cu(2+). Its function is as follows. Component of the toluene-4-monooxygenase multicomponent enzyme system which catalyzes the O2- and NADH-dependent hydroxylation of toluene to form p-cresol. Also able to convert benzene to phenol, catechol, and 1,2,3-trihydroxybenzene by successive hydroxylations. The protein is Toluene-4-monooxygenase system, hydroxylase component subunit alpha of Ectopseudomonas mendocina (Pseudomonas mendocina).